The following is a 619-amino-acid chain: UvrABC system protein C (619 aa).

The GIY-YIG domain maps to 20–98 (TAPGVYRMYA…IKSLSPRYNV (79 aa)). A UVR domain is found at 207 to 242 (DQLGEEIMHSMQQASEALEFERAARLRDLLSSLRSM).

This sequence belongs to the UvrC family. Interacts with UvrB in an incision complex.

It is found in the cytoplasm. The UvrABC repair system catalyzes the recognition and processing of DNA lesions. UvrC both incises the 5' and 3' sides of the lesion. The N-terminal half is responsible for the 3' incision and the C-terminal half is responsible for the 5' incision. The protein is UvrABC system protein C of Xanthomonas axonopodis pv. citri (strain 306).